Reading from the N-terminus, the 446-residue chain is UDP-N-acetylmuramoylalanine--D-glutamate ligase (446 aa).

An ATP-binding site is contributed by 112–118; that stretch reads GTNGKST.

This sequence belongs to the MurCDEF family.

The protein localises to the cytoplasm. The catalysed reaction is UDP-N-acetyl-alpha-D-muramoyl-L-alanine + D-glutamate + ATP = UDP-N-acetyl-alpha-D-muramoyl-L-alanyl-D-glutamate + ADP + phosphate + H(+). It participates in cell wall biogenesis; peptidoglycan biosynthesis. Functionally, cell wall formation. Catalyzes the addition of glutamate to the nucleotide precursor UDP-N-acetylmuramoyl-L-alanine (UMA). The sequence is that of UDP-N-acetylmuramoylalanine--D-glutamate ligase from Baumannia cicadellinicola subsp. Homalodisca coagulata.